A 440-amino-acid polypeptide reads, in one-letter code: Damage-control phosphatase ARMT1 (440 aa).

Residues aspartate 252 and asparagine 253 each coordinate Mn(2+). Substrate is bound at residue 252 to 253; that stretch reads DN. S-adenosyl-L-methionine-binding residues include glutamate 257 and aspartate 290. A Mn(2+)-binding site is contributed by aspartate 290. Substrate is bound by residues 366–370 and lysine 403; that span reads DLNYR. Positions 400-403 match the Subfamily III RTxK motif motif; that stretch reads RTLK.

It belongs to the damage-control phosphatase family. Sugar phosphate phosphatase III subfamily. The cofactor is Mn(2+). Ni(2+) serves as cofactor. Post-translationally, automethylated.

It carries out the reaction beta-D-fructose 1-phosphate + H2O = D-fructose + phosphate. It catalyses the reaction beta-D-fructose 6-phosphate = dihydroxyacetone + D-glyceraldehyde 3-phosphate. The catalysed reaction is L-glutamyl-[protein] + S-adenosyl-L-methionine = [protein]-L-glutamate 5-O-methyl ester + S-adenosyl-L-homocysteine. Metal-dependent phosphatase that shows phosphatase activity against several substrates, including fructose-1-phosphate and fructose-6-phosphate. Its preference for fructose-1-phosphate, a strong glycating agent that causes DNA damage rather than a canonical yeast metabolite, suggests a damage-control function in hexose phosphate metabolism. Has also been shown to have O-methyltransferase activity that methylates glutamate residues of target proteins to form gamma-glutamyl methyl ester residues. Possibly methylates PCNA, suggesting it is involved in the DNA damage response. The sequence is that of Damage-control phosphatase ARMT1 from Xenopus laevis (African clawed frog).